The following is a 224-amino-acid chain: Thymidylate kinase (224 aa).

7–14 is a binding site for ATP; sequence GIEGSGKS.

This sequence belongs to the thymidylate kinase family.

The catalysed reaction is dTMP + ATP = dTDP + ADP. Its function is as follows. Phosphorylation of dTMP to form dTDP in both de novo and salvage pathways of dTTP synthesis. The sequence is that of Thymidylate kinase from Nitratidesulfovibrio vulgaris (strain DP4) (Desulfovibrio vulgaris).